Reading from the N-terminus, the 307-residue chain is uncharacterized protein (307 aa).

The chain crosses the membrane as a helical span at residues 12–34; it reads LLAFLLALIMIGSVFAYMLSGGS.

The protein resides in the membrane. This is an uncharacterized protein from Archaeoglobus fulgidus (strain ATCC 49558 / DSM 4304 / JCM 9628 / NBRC 100126 / VC-16).